The sequence spans 1017 residues: Protein translocase subunit SecA 1 (1017 aa).

ATP contacts are provided by residues Q143, 161–165, and D661; that span reads GEGKT. The tract at residues 978-999 is disordered; the sequence is GLNDDDEPLPAQPITTEQKPGR. Zn(2+) is bound by residues C1003, C1005, C1014, and C1015.

This sequence belongs to the SecA family. As to quaternary structure, monomer and homodimer. Part of the essential Sec protein translocation apparatus which comprises SecA, SecYEG and auxiliary proteins SecDF. Other proteins may also be involved. The cofactor is Zn(2+).

It localises to the cell inner membrane. It is found in the cytoplasm. The catalysed reaction is ATP + H2O + cellular proteinSide 1 = ADP + phosphate + cellular proteinSide 2.. In terms of biological role, part of the Sec protein translocase complex. Interacts with the SecYEG preprotein conducting channel. Has a central role in coupling the hydrolysis of ATP to the transfer of proteins into and across the cell membrane, serving as an ATP-driven molecular motor driving the stepwise translocation of polypeptide chains across the membrane. In Chlorobium chlorochromatii (strain CaD3), this protein is Protein translocase subunit SecA 1.